Reading from the N-terminus, the 220-residue chain is Fructose-6-phosphate aldolase 1 (220 aa).

Lys85 (schiff-base intermediate with substrate) is an active-site residue.

Belongs to the transaldolase family. Type 3A subfamily. Homodecamer.

The protein resides in the cytoplasm. The catalysed reaction is beta-D-fructose 6-phosphate = dihydroxyacetone + D-glyceraldehyde 3-phosphate. Functionally, catalyzes the reversible formation of fructose 6-phosphate from dihydroxyacetone and D-glyceraldehyde 3-phosphate via an aldolization reaction. The chain is Fructose-6-phosphate aldolase 1 (fsaA) from Escherichia coli O6:H1 (strain CFT073 / ATCC 700928 / UPEC).